The chain runs to 242 residues: DNA repair protein RecO (242 aa).

It belongs to the RecO family.

Involved in DNA repair and RecF pathway recombination. The sequence is that of DNA repair protein RecO from Laribacter hongkongensis (strain HLHK9).